Consider the following 173-residue polypeptide: NADH-ubiquinone oxidoreductase chain 6 (173 aa).

6 helical membrane-spanning segments follow: residues 1–21, 27–47, 48–68, 85–105, 106–126, and 139–159; these read MTYF…AVAS, YGVV…LSLG, VSFV…VVFV, WGVV…LIVG, GSIG…MFSV, and CGVG…FVVL.

Belongs to the complex I subunit 6 family.

The protein localises to the mitochondrion membrane. The catalysed reaction is a ubiquinone + NADH + 5 H(+)(in) = a ubiquinol + NAD(+) + 4 H(+)(out). Core subunit of the mitochondrial membrane respiratory chain NADH dehydrogenase (Complex I) that is believed to belong to the minimal assembly required for catalysis. Complex I functions in the transfer of electrons from NADH to the respiratory chain. The immediate electron acceptor for the enzyme is believed to be ubiquinone. The sequence is that of NADH-ubiquinone oxidoreductase chain 6 (MT-ND6) from Aethia psittacula (Parakeet auklet).